The primary structure comprises 92 residues: Small ribosomal subunit protein uS19 (92 aa).

The protein belongs to the universal ribosomal protein uS19 family.

Its function is as follows. Protein S19 forms a complex with S13 that binds strongly to the 16S ribosomal RNA. This chain is Small ribosomal subunit protein uS19, found in Azorhizobium caulinodans (strain ATCC 43989 / DSM 5975 / JCM 20966 / LMG 6465 / NBRC 14845 / NCIMB 13405 / ORS 571).